Here is a 122-residue protein sequence, read N- to C-terminus: Prefoldin subunit 1 (122 aa).

The protein belongs to the prefoldin subunit beta family. In terms of assembly, heterohexamer of two PFD-alpha type and four PFD-beta type subunits.

Binds specifically to cytosolic chaperonin (c-CPN) and transfers target proteins to it. Binds to nascent polypeptide chain and promotes folding in an environment in which there are many competing pathways for nonnative proteins. The polypeptide is Prefoldin subunit 1 (pfdn1) (Danio rerio (Zebrafish)).